Reading from the N-terminus, the 538-residue chain is Tryptophan 7-halogenase PrnA (538 aa).

The FAD site is built by Gly-13, Thr-15, Ala-16, Ser-39, Ile-42, Ile-45, Glu-49, and Ala-50. Lys-79 is a catalytic residue. Lys-79 serves as a coordination point for 7-chloro-L-tryptophan. Residues Val-187 and Leu-337 each coordinate FAD. 7-chloro-L-tryptophan is bound at residue Glu-346. Glu-346 is a binding site for L-tryptophan. Residues Thr-348 and Gly-349 each coordinate chloride. FAD is bound at residue Ile-350. Tyr-443, Tyr-444, Glu-450, and Phe-454 together coordinate 7-chloro-L-tryptophan. The L-tryptophan site is built by Tyr-443, Tyr-444, Glu-450, and Phe-454.

The protein belongs to the flavin-dependent halogenase family. Bacterial tryptophan halogenase subfamily. In terms of assembly, homodimer.

The catalysed reaction is L-tryptophan + FADH2 + chloride + O2 = 7-chloro-L-tryptophan + FAD + 2 H2O. It functions in the pathway antibiotic biosynthesis. Involved in the biosynthesis of the antifungal antibiotic pyrrolnitrin. Catalyzes the chlorination of tryptophan (Trp) at C7 position to yield 7-chloro-L-tryptophan (7-CLT). In Pseudomonas fluorescens, this protein is Tryptophan 7-halogenase PrnA.